We begin with the raw amino-acid sequence, 578 residues long: Putative multidrug export ATP-binding/permease protein SA1683 (578 aa).

The Cytoplasmic segment spans residues 1–15 (MIKRYLQFVKPYKYR). A helical membrane pass occupies residues 16–36 (IFATIIVGIIKFGIPMLIPLL). The region spanning 16-306 (IFATIIVGII…LVASFTTLTQ (291 aa)) is the ABC transmembrane type-1 domain. Over 37–59 (IKYAIDGVINNHALTTDEKVHHL) the chain is Extracellular. A helical membrane pass occupies residues 60–80 (TIAIGIALFIFVIVRPPIEFI). Residues 81 to 138 (RQYLAQWTSNKILYDIRKKLYNHLQALSARFYANNQVGQVISRVINDVEQTKDFILTG) lie on the Cytoplasmic side of the membrane. Residues 139 to 159 (LMNIWLDCITIIIALSIMFFL) form a helical membrane-spanning segment. At 160 to 162 (DVK) the chain is on the extracellular side. A helical transmembrane segment spans residues 163–183 (LTLAALFIFPFYILTVYVFFG). Residues 184–244 (RLRKLTRERS…TRALKHTRWN (61 aa)) are Cytoplasmic-facing. The chain crosses the membrane as a helical span at residues 245–263 (AYSFAAINTVTDIGPIIVI). Over 264 to 269 (GVGAYL) the chain is Extracellular. Residues 270-287 (AISGSITVGTLAAFVGYL) form a helical membrane-spanning segment. Residues 288 to 578 (ELLFGPLRRL…YEHLYSIQNL (291 aa)) are Cytoplasmic-facing. The region spanning 340 to 575 (IDIDHVSFQY…QGAYEHLYSI (236 aa)) is the ABC transporter domain. 374–381 (GMSGGGKS) contributes to the ATP binding site.

Belongs to the ABC transporter superfamily. In terms of assembly, homodimer.

Its subcellular location is the cell membrane. In terms of biological role, may be involved in multidrug export. Transmembrane domains (TMD) form a pore in the cell membrane and the ATP-binding domain (NBD) is responsible for energy generation. The protein is Putative multidrug export ATP-binding/permease protein SA1683 of Staphylococcus aureus (strain N315).